Consider the following 248-residue polypeptide: MAPGAPSSSPSPILAVLLFSSLVLSPAQAIVVYTDREVHGAVGSRVTLHCSFWSSEWVSDDISFTWRYQPEGGRDAISIFHYAKGQPYIDEVGTFKERIQWVGDPRWKDGSIVIHNLDYSDNGTFTCDVKNPPDIVGKTSQVTLYVFEKVPTRYGVVLGAVIGGVLGVVLLLLLLFYVVRYCWLRRQAALQRRLSAMEKGKLHKPGKDASKRGRQTPVLYAMLDHSRSTKAVSEKKAKGLGESRKDKK.

An N-terminal signal peptide occupies residues 1–29; that stretch reads MAPGAPSSSPSPILAVLLFSSLVLSPAQA. Residues 30-143 enclose the Ig-like V-type domain; that stretch reads IVVYTDREVH…DIVGKTSQVT (114 aa). Residues 30-153 are Extracellular-facing; it reads IVVYTDREVH…LYVFEKVPTR (124 aa). Residues Cys50 and Cys127 are joined by a disulfide bond. An N-linked (GlcNAc...) (complex) asparagine glycan is attached at Asn122. A helical transmembrane segment spans residues 154–179; it reads YGVVLGAVIGGVLGVVLLLLLLFYVV. At 180 to 248 the chain is on the cytoplasmic side; sequence RYCWLRRQAA…GLGESRKDKK (69 aa). Ser210 bears the Phosphoserine; by PKC mark. Residues 224 to 248 form a disordered region; that stretch reads DHSRSTKAVSEKKAKGLGESRKDKK. Residues Ser226 and Ser228 each carry the phosphoserine modification. Ser233 and Ser243 each carry phosphoserine; by PKC.

The protein belongs to the myelin P0 protein family. Homodimer and homotetramer. Post-translationally, N-glycosylated; contains sulfate-substituted glycan. Found only in peripheral nervous system Schwann cells.

The protein resides in the cell membrane. The protein localises to the myelin membrane. Functionally, is an adhesion molecule necessary for normal myelination in the peripheral nervous system. It mediates adhesion between adjacent myelin wraps and ultimately drives myelin compaction. This chain is Myelin protein P0 (MPZ), found in Homo sapiens (Human).